A 456-amino-acid chain; its full sequence is Transcription factor tau subunit sfc1 (456 aa).

2 disordered regions span residues 394-416 (DRYS…GLNT) and 437-456 (HEGF…IFGD). The segment covering 407 to 416 (LNDTVRGLNT) has biased composition (polar residues). The segment covering 441 to 456 (EDLEEIDDDYDDIFGD) has biased composition (acidic residues).

In terms of assembly, component of the TFIIIC complex including sfc1, sfc3, sfc4, sfc6 and sfc7. The subunits are organized in two globular domains, tauA and tauB, connected by a proteolysis-sensitive and flexible linker. Interacts with sfc3, sfc4 and sfc6. Post-translationally, phosphorylated.

It localises to the nucleus. TFIIIC mediates tRNA and 5S RNA gene activation by binding to intragenic promoter elements. Upstream of the transcription start site, TFIIIC assembles the initiation complex TFIIIB-TFIIIC-tDNA, which is sufficient for RNA polymerase III recruitment and function. Part of the tauA domain of TFIIIC that binds boxA DNA promoter sites of tRNA and similar genes. Participates in the interconnection of tauA with tauB via its contacts with sfc3 and sfc6. Serves as a scaffold critical for tauA-DNA spatial configuration and tauB-DNA stability. Localizes to chromatin insulator sequence without recruiting RNA polymerase III and plays a role in nuclear organization. In Schizosaccharomyces pombe (strain 972 / ATCC 24843) (Fission yeast), this protein is Transcription factor tau subunit sfc1 (sfc1).